The following is a 247-amino-acid chain: Cell division protein ZapD (247 aa).

This sequence belongs to the ZapD family. In terms of assembly, interacts with FtsZ.

Its subcellular location is the cytoplasm. In terms of biological role, cell division factor that enhances FtsZ-ring assembly. Directly interacts with FtsZ and promotes bundling of FtsZ protofilaments, with a reduction in FtsZ GTPase activity. The polypeptide is Cell division protein ZapD (Enterobacter sp. (strain 638)).